The following is a 203-amino-acid chain: Thymidylate kinase (203 aa).

Position 7–14 (7–14) interacts with ATP; it reads GGEGAGKT.

The protein belongs to the thymidylate kinase family.

The catalysed reaction is dTMP + ATP = dTDP + ADP. In terms of biological role, phosphorylation of dTMP to form dTDP in both de novo and salvage pathways of dTTP synthesis. This Chlamydia trachomatis serovar L2 (strain ATCC VR-902B / DSM 19102 / 434/Bu) protein is Thymidylate kinase.